An 881-amino-acid polypeptide reads, in one-letter code: Heat shock protein 70 homolog LHS1 (881 aa).

Residues Met-1–Ala-20 form the signal peptide. Asn-128, Asn-458, Asn-474, Asn-481, Asn-489, Asn-527, and Asn-844 each carry an N-linked (GlcNAc...) asparagine glycan. Over residues Arg-833–Asn-844 the composition is skewed to basic and acidic residues. The disordered stretch occupies residues Arg-833–Leu-881. The segment covering Thr-859–Ser-871 has biased composition (polar residues). Residues Ser-872–Leu-881 are compositionally biased toward acidic residues. Positions His-878 to Leu-881 match the Prevents secretion from ER motif.

The protein belongs to the heat shock protein 70 family. As to quaternary structure, interacts with the heat shock protein 70 (HSP70) KAR2, and this stimulates nucleotide exchange on KAR2. KAR2 in turn acts to stimulate the ATPase activity of LHS1. In terms of processing, N-glycosylated.

The protein resides in the endoplasmic reticulum lumen. The enzyme catalyses ATP + H2O = ADP + phosphate + H(+). Functionally, chaperone required for protein translocation and folding in the endoplasmic reticulum. The chain is Heat shock protein 70 homolog LHS1 (LHS1) from Saccharomyces cerevisiae (strain ATCC 204508 / S288c) (Baker's yeast).